The following is a 516-amino-acid chain: L-amino-acid oxidase (516 aa).

An N-terminal signal peptide occupies residues Met1 to Cys18. An intrachain disulfide couples Cys28 to Cys191. Residues Met61–Ser62, Glu81–Ala82, Arg89, and Gly105–Arg108 contribute to the FAD site. A substrate-binding site is contributed by Arg108. An N-linked (GlcNAc...) asparagine glycan is attached at Asn190. Residue His241 participates in substrate binding. Val279 provides a ligand contact to FAD. Cys349 and Cys430 are joined by a disulfide. Residue Asn379 is glycosylated (N-linked (GlcNAc...) asparagine). Residue Tyr390 participates in substrate binding. Residues Glu475, His481 to Ser486, and Gly482 to Ser487 each bind FAD. Substrate is bound by residues His481–Gly482 and Gly482–Trp483.

It belongs to the flavin monoamine oxidase family. FIG1 subfamily. Homodimer; non-covalently linked. FAD serves as cofactor. In terms of processing, N-glycosylated. Expressed by the venom gland.

It localises to the secreted. It carries out the reaction an L-alpha-amino acid + O2 + H2O = a 2-oxocarboxylate + H2O2 + NH4(+). Its function is as follows. Catalyzes an oxidative deamination of predominantly hydrophobic and aromatic L-amino acids, thus producing hydrogen peroxide that may contribute to the diverse toxic effects of this enzyme. Exhibits diverse biological activities, such as hemorrhage, hemolysis, edema, apoptosis of vascular endothelial cells or tumor cell lines, antibacterial and antiparasitic activities, as well as regulation of platelet aggregation. Effects of snake L-amino oxidases on platelets are controversial, since they either induce aggregation or inhibit agonist-induced aggregation. These different effects are probably due to different experimental conditions. Displays dose-dependent inhibition on HIV-1 infection and replication. The protein is L-amino-acid oxidase of Trimeresurus stejnegeri (Chinese green tree viper).